Reading from the N-terminus, the 120-residue chain is Large ribosomal subunit protein bL17 (120 aa).

This sequence belongs to the bacterial ribosomal protein bL17 family. As to quaternary structure, part of the 50S ribosomal subunit. Contacts protein L32.

In Shouchella clausii (strain KSM-K16) (Alkalihalobacillus clausii), this protein is Large ribosomal subunit protein bL17.